The sequence spans 413 residues: Tryptophan synthase beta chain (413 aa).

Lys-106 carries the post-translational modification N6-(pyridoxal phosphate)lysine.

It belongs to the TrpB family. Tetramer of two alpha and two beta chains. It depends on pyridoxal 5'-phosphate as a cofactor.

It catalyses the reaction (1S,2R)-1-C-(indol-3-yl)glycerol 3-phosphate + L-serine = D-glyceraldehyde 3-phosphate + L-tryptophan + H2O. It participates in amino-acid biosynthesis; L-tryptophan biosynthesis; L-tryptophan from chorismate: step 5/5. The beta subunit is responsible for the synthesis of L-tryptophan from indole and L-serine. In Methylobacterium radiotolerans (strain ATCC 27329 / DSM 1819 / JCM 2831 / NBRC 15690 / NCIMB 10815 / 0-1), this protein is Tryptophan synthase beta chain.